Here is a 157-residue protein sequence, read N- to C-terminus: Nucleoside deoxyribosyltransferase (157 aa).

The Nucleophile role is filled by Glu98.

The protein belongs to the nucleoside deoxyribosyltransferase family. Homohexamer.

The catalysed reaction is 2-deoxy-D-ribosyl-base(1) + base(2) = 2-deoxy-D-ribosyl-base(2) + base(1).. Its pathway is nucleotide metabolism; nucleotide salvage pathway. Functionally, catalyzes the cleavage of the glycosidic bond of 2'-deoxyribonucleosides and the transfer of the deoxyribosyl moiety to an acceptor purine or pyrimidine base. This is Nucleoside deoxyribosyltransferase (ntd) from Lactobacillus leichmannii.